Reading from the N-terminus, the 287-residue chain is Putative sugar uptake protein M6_Spy1874 (287 aa).

The next 10 membrane-spanning stretches (helical) occupy residues 4-26, 33-50, 55-72, 85-107, 117-134, 154-171, 181-200, 207-229, 234-256, and 268-285; these read IFYA…KIGG, LGMT…WLIV, TLQL…WSIG, VSVA…GVLV, FVVG…FYFS, FRAL…AVLF, SVIL…FMSF, YVIK…LLAA, LAIA…ILFL, and VVTG…LGVV.

This sequence belongs to the GRP transporter (TC 2.A.7.5) family.

Its subcellular location is the cell membrane. The polypeptide is Putative sugar uptake protein M6_Spy1874 (Streptococcus pyogenes serotype M6 (strain ATCC BAA-946 / MGAS10394)).